A 228-amino-acid chain; its full sequence is Adapter protein MecA (228 aa).

The interval 79–98 is disordered; sequence GQKNDDSAADQTDDEGTDTQ. Residues 85–95 are compositionally biased toward acidic residues; sequence SAADQTDDEGT.

Belongs to the MecA family. As to quaternary structure, homodimer.

Its function is as follows. Enables the recognition and targeting of unfolded and aggregated proteins to the ClpC protease or to other proteins involved in proteolysis. The chain is Adapter protein MecA from Lacticaseibacillus casei (strain BL23) (Lactobacillus casei).